Here is a 155-residue protein sequence, read N- to C-terminus: Cytochrome P450 (155 aa).

Position 99 (cysteine 99) interacts with heme.

This sequence belongs to the cytochrome P450 family. The cofactor is heme.

In Helianthus annuus (Common sunflower), this protein is Cytochrome P450.